The primary structure comprises 368 residues: 3-dehydroquinate synthase (368 aa).

The protein belongs to the archaeal-type DHQ synthase family.

It catalyses the reaction 2-amino-2,3,7-trideoxy-D-lyxo-hept-6-ulosonate + NAD(+) + H2O = 3-dehydroquinate + NH4(+) + NADH + H(+). Catalyzes the oxidative deamination and cyclization of 2-amino-3,7-dideoxy-D-threo-hept-6-ulosonic acid (ADH) to yield 3-dehydroquinate (DHQ), which is fed into the canonical shikimic pathway of aromatic amino acid biosynthesis. The sequence is that of 3-dehydroquinate synthase from Methanobrevibacter smithii (strain ATCC 35061 / DSM 861 / OCM 144 / PS).